A 292-amino-acid chain; its full sequence is uncharacterized protein (292 aa).

Transmembrane regions (helical) follow at residues 17–37, 135–155, 166–186, and 216–236; these read LFYT…FPAL, LIAV…IGQL, TTLW…YDIV, and FHGV…TALY. The tract at residues 267–292 is disordered; the sequence is EKSEDKKSIVTSRIEEENEDEISDYE. Residues 282 to 292 are compositionally biased toward acidic residues; sequence EENEDEISDYE.

The protein localises to the membrane. This is an uncharacterized protein from Caenorhabditis elegans.